The primary structure comprises 327 residues: MSVFSRLRNGIPPSRDDCQSPYERLSQRMLDISGDRGVLKDIIREGAGDPVTPDASVLVKYSGYLEHMDKPFDSNCFRKTPRLMKLGEDITLWGMELGLLSMRRGELARFLFKPTYAYGTLGCPPLIPPNATVLFEIELIDFLDSAESDKFCALSAEQQEQFPLQKVLKVAATEREFGNYLFRQNRFCDAKVRYKRALLLLHRRLAICEEQHLVEPAELLVLLNLSFVYLKLDRPAMALRYGEQALLIDKRNAKALFRCGQACLLLTEYEQARDFLVRAQKEQPCNHDINNELKKLSSHYRDYVDREREMCHRMFAPCGSGSSVGGN.

Residues 1-20 are disordered; sequence MSVFSRLRNGIPPSRDDCQS. The PPIase FKBP-type domain maps to 54–143; it reads DASVLVKYSG…LFEIELIDFL (90 aa). TPR repeat units follow at residues 171 to 204, 219 to 252, and 253 to 286; these read AATE…LHRR, LLVL…DKRN, and AKAL…QPCN.

This sequence belongs to the FKBP6 family. In terms of assembly, interacts with HSP72/HSPA2 and CLTC. Interacts with GAPDH; leading to inhibit GAPDH catalytic activity. Interacts (via TPR repeats) with HSP90.

The protein resides in the cytoplasm. It is found in the cytosol. Its subcellular location is the nucleus. It localises to the chromosome. Co-chaperone required during spermatogenesis to repress transposable elements and prevent their mobilization, which is essential for the germline integrity. Acts via the piRNA metabolic process, which mediates the repression of transposable elements during meiosis by forming complexes composed of piRNAs and Piwi proteins and govern the methylation and subsequent repression of transposons. Acts as a co-chaperone via its interaction with HSP90 and is required for the piRNA amplification process, the secondary piRNA biogenesis. May be required together with HSP90 in removal of 16 nucleotide ping-pong by-products from Piwi complexes, possibly facilitating turnover of Piwi complexes. The sequence is that of Inactive peptidyl-prolyl cis-trans isomerase FKBP6 (Fkbp6) from Rattus norvegicus (Rat).